A 473-amino-acid polypeptide reads, in one-letter code: Glutamate--tRNA ligase 2 (473 aa).

The 'HIGH' region signature appears at 11-21; sequence PSPTGYLHIGG. Positions 113 to 133 are enriched in basic and acidic residues; the sequence is KARAEGRPPRYDGRWRDRDPS. Residues 113 to 136 are disordered; sequence KARAEGRPPRYDGRWRDRDPSEAP. A 'KMSKS' region motif is present at residues 240–244; it reads KLSKR. Lysine 243 serves as a coordination point for ATP.

The protein belongs to the class-I aminoacyl-tRNA synthetase family. Glutamate--tRNA ligase type 1 subfamily. In terms of assembly, monomer.

It is found in the cytoplasm. It catalyses the reaction tRNA(Glu) + L-glutamate + ATP = L-glutamyl-tRNA(Glu) + AMP + diphosphate. Catalyzes the attachment of glutamate to tRNA(Glu) in a two-step reaction: glutamate is first activated by ATP to form Glu-AMP and then transferred to the acceptor end of tRNA(Glu). This Brucella canis (strain ATCC 23365 / NCTC 10854 / RM-666) protein is Glutamate--tRNA ligase 2.